A 546-amino-acid polypeptide reads, in one-letter code: Major facilitator superfamily transporter MPN_077 (546 aa).

12 consecutive transmembrane segments (helical) span residues 2 to 22 (WGLV…IDFI), 62 to 82 (WTIT…VVKF), 88 to 108 (VMIM…GSPL), 179 to 199 (AFFI…IAYA), 220 to 240 (FWGF…PGVG), 248 to 268 (VWVV…FAWF), 305 to 325 (LLAI…QTWF), 344 to 364 (PILL…LSPF), 377 to 397 (FIFT…ATLG), 401 to 421 (VVGF…GWSL), 442 to 462 (IIFG…DIIT), and 485 to 505 (IAAI…IIYL).

Belongs to the major facilitator superfamily.

It is found in the cell membrane. The polypeptide is Major facilitator superfamily transporter MPN_077 (Mycoplasma pneumoniae (strain ATCC 29342 / M129 / Subtype 1) (Mycoplasmoides pneumoniae)).